The chain runs to 67 residues: MMSKLGVLLITCLLLFPLTAVPLDGDQPADQPAERLQDDISSENHPFFDPVKRCCRLLCLSCNPCCG.

The signal sequence occupies residues 1–20; sequence MMSKLGVLLITCLLLFPLTA. Positions 21 to 53 are excised as a propeptide; it reads VPLDGDQPADQPAERLQDDISSENHPFFDPVKR. Cystine bridges form between C54/C66, C55/C62, and C59/C65. P64 bears the 4-hydroxyproline mark. At C66 the chain carries Cysteine amide.

Belongs to the conotoxin M superfamily. Expressed by the venom duct.

Its subcellular location is the secreted. This chain is Conotoxin TxMMSK-01, found in Conus textile (Cloth-of-gold cone).